Consider the following 405-residue polypeptide: MSLTQSKEVNSLSRRYSTYIERRITRTVMVGDIAIGSDYPVRVQSMINEDTMDVDNSYLAIKRLHEVGCEIVRLTVPSLAHAKAVGDIKEKLIKNNIDTPLVADVHHNGMKIAMEVAKHVDKVRINPGLFVFEKSDPTRTEYTDTEFETIKKTILKRFTPLVEVLKSENKALRIGVNHGSLSERMLFTYGDTPLGMTESAMEFVKICDELDFHNIIISMKASRAPVMLAAYRMIADRLDAEGYNYPLHLGVTEAGDGDYGRIKSTAGIGTLLAEGLGDTIRVSLTEAPEKEIPVCYSILQSLGLRKTMVEYISCPSCGRTLFNLEEVVDKVRKATSHLTGLDIAIMGCIVNGPGEMADADYGYVGKGKGTIALYRRKEEIKRVPEDEGVDALIRLIKDDGKWIDP.

[4Fe-4S] cluster-binding residues include Cys-314, Cys-317, Cys-348, and Glu-355.

This sequence belongs to the IspG family. The cofactor is [4Fe-4S] cluster.

It catalyses the reaction (2E)-4-hydroxy-3-methylbut-2-enyl diphosphate + 2 oxidized [2Fe-2S]-[ferredoxin] + H2O = 2-C-methyl-D-erythritol 2,4-cyclic diphosphate + 2 reduced [2Fe-2S]-[ferredoxin] + H(+). It functions in the pathway isoprenoid biosynthesis; isopentenyl diphosphate biosynthesis via DXP pathway; isopentenyl diphosphate from 1-deoxy-D-xylulose 5-phosphate: step 5/6. Its function is as follows. Converts 2C-methyl-D-erythritol 2,4-cyclodiphosphate (ME-2,4cPP) into 1-hydroxy-2-methyl-2-(E)-butenyl 4-diphosphate. The sequence is that of 4-hydroxy-3-methylbut-2-en-1-yl diphosphate synthase (ferredoxin) from Prochlorococcus marinus subsp. pastoris (strain CCMP1986 / NIES-2087 / MED4).